We begin with the raw amino-acid sequence, 311 residues long: tRNA-cytidine(32) 2-sulfurtransferase (311 aa).

The PP-loop motif motif lies at 47–52; the sequence is SGGKDS. 3 residues coordinate [4Fe-4S] cluster: Cys-122, Cys-125, and Cys-213.

The protein belongs to the TtcA family. As to quaternary structure, homodimer. It depends on Mg(2+) as a cofactor. Requires [4Fe-4S] cluster as cofactor.

Its subcellular location is the cytoplasm. It carries out the reaction cytidine(32) in tRNA + S-sulfanyl-L-cysteinyl-[cysteine desulfurase] + AH2 + ATP = 2-thiocytidine(32) in tRNA + L-cysteinyl-[cysteine desulfurase] + A + AMP + diphosphate + H(+). Its pathway is tRNA modification. Functionally, catalyzes the ATP-dependent 2-thiolation of cytidine in position 32 of tRNA, to form 2-thiocytidine (s(2)C32). The sulfur atoms are provided by the cysteine/cysteine desulfurase (IscS) system. This chain is tRNA-cytidine(32) 2-sulfurtransferase, found in Escherichia coli (strain SMS-3-5 / SECEC).